The chain runs to 122 residues: Large ribosomal subunit protein uL14 (122 aa).

It belongs to the universal ribosomal protein uL14 family. In terms of assembly, part of the 50S ribosomal subunit. Forms a cluster with proteins L3 and L19. In the 70S ribosome, L14 and L19 interact and together make contacts with the 16S rRNA in bridges B5 and B8.

Binds to 23S rRNA. Forms part of two intersubunit bridges in the 70S ribosome. This Bacillus velezensis (strain DSM 23117 / BGSC 10A6 / LMG 26770 / FZB42) (Bacillus amyloliquefaciens subsp. plantarum) protein is Large ribosomal subunit protein uL14.